The following is a 306-amino-acid chain: Ribonuclease Z (306 aa).

Positions 63, 65, 67, 68, 141, 208, and 266 each coordinate Zn(2+). D67 functions as the Proton acceptor in the catalytic mechanism.

The protein belongs to the RNase Z family. Homodimer. The cofactor is Zn(2+).

It carries out the reaction Endonucleolytic cleavage of RNA, removing extra 3' nucleotides from tRNA precursor, generating 3' termini of tRNAs. A 3'-hydroxy group is left at the tRNA terminus and a 5'-phosphoryl group is left at the trailer molecule.. Functionally, zinc phosphodiesterase, which displays some tRNA 3'-processing endonuclease activity. Probably involved in tRNA maturation, by removing a 3'-trailer from precursor tRNA. This is Ribonuclease Z from Chlamydia abortus (strain DSM 27085 / S26/3) (Chlamydophila abortus).